Here is a 152-residue protein sequence, read N- to C-terminus: Ribosome maturation factor RimP (152 aa).

It belongs to the RimP family.

Its subcellular location is the cytoplasm. Required for maturation of 30S ribosomal subunits. This Burkholderia lata (strain ATCC 17760 / DSM 23089 / LMG 22485 / NCIMB 9086 / R18194 / 383) protein is Ribosome maturation factor RimP.